A 246-amino-acid polypeptide reads, in one-letter code: Phycocyanobilin:ferredoxin oxidoreductase (246 aa).

It belongs to the HY2 family.

The catalysed reaction is (2R,3Z)-phycocyanobilin + 4 oxidized [2Fe-2S]-[ferredoxin] = biliverdin IXalpha + 4 reduced [2Fe-2S]-[ferredoxin] + 4 H(+). Functionally, catalyzes the four-electron reduction of biliverdin IX-alpha (2-electron reduction at both the A and D rings); the reaction proceeds via an isolatable 2-electron intermediate, 181,182-dihydrobiliverdin. This Synechococcus sp. (strain CC9902) protein is Phycocyanobilin:ferredoxin oxidoreductase.